The chain runs to 131 residues: Large ribosomal subunit protein bL17 (131 aa).

It belongs to the bacterial ribosomal protein bL17 family. As to quaternary structure, part of the 50S ribosomal subunit. Contacts protein L32.

This is Large ribosomal subunit protein bL17 from Hamiltonella defensa subsp. Acyrthosiphon pisum (strain 5AT).